A 287-amino-acid polypeptide reads, in one-letter code: Hypersensitive-induced response protein-like protein 2 (287 aa).

The N-myristoyl glycine moiety is linked to residue Gly-2.

In terms of biological role, positive regulator of hypersensitive response (HR)-like cell death. May be involved in potassium ion channel regulation. The polypeptide is Hypersensitive-induced response protein-like protein 2 (HIRL2) (Oryza sativa subsp. japonica (Rice)).